A 225-amino-acid chain; its full sequence is MKIVVPIMPTSLEEAQALELSRFEGADIIEWRADFLDKHSILTVAPAIFEKFAGFEIVFTIRTTREGGKIELTDGEYVTLIKDVAAIYSPDYIDFEYFTRKEVFDQMLGFSNLVLSYHNFEETPENLMELLSEMTNLTPRVVKVAVMPKNEQDVLDLMNFTRGFKAFNPEQEFVTMSMGKLGRLSRLAGDLVGSSWTFASLDNTSAPGQVALADMCRIREVLDAD.

3-dehydroquinate contacts are provided by residues 30-32 (EWR) and arginine 62. Residue histidine 118 is the Proton donor/acceptor of the active site. Lysine 143 functions as the Schiff-base intermediate with substrate in the catalytic mechanism. The 3-dehydroquinate site is built by arginine 186, serine 205, and glutamine 209.

The protein belongs to the type-I 3-dehydroquinase family. In terms of assembly, homodimer.

The catalysed reaction is 3-dehydroquinate = 3-dehydroshikimate + H2O. It participates in metabolic intermediate biosynthesis; chorismate biosynthesis; chorismate from D-erythrose 4-phosphate and phosphoenolpyruvate: step 3/7. Its function is as follows. Involved in the third step of the chorismate pathway, which leads to the biosynthesis of aromatic amino acids. Catalyzes the cis-dehydration of 3-dehydroquinate (DHQ) and introduces the first double bond of the aromatic ring to yield 3-dehydroshikimate. The protein is 3-dehydroquinate dehydratase of Streptococcus thermophilus (strain ATCC BAA-250 / LMG 18311).